The chain runs to 707 residues: Bone morphogenetic protein 1 (707 aa).

A disordered region spans residues 57-90 (SGAATNISRPEKGRRTRKERRRSREKRASTSRPE). A glycan (N-linked (GlcNAc...) asparagine) is linked at asparagine 62. A compositionally biased stretch (basic residues) spans 68 to 81 (KGRRTRKERRRSRE). One can recognise a Peptidase M12A domain in the interval 84–283 (ASTSRPERVW…AQARKLYKCP (200 aa)). A glycan (N-linked (GlcNAc...) asparagine) is linked at asparagine 105. Cystine bridges form between cysteine 126/cysteine 282, cysteine 146/cysteine 168, cysteine 148/cysteine 149, and cysteine 285/cysteine 311. Zn(2+) is bound at residue histidine 176. The active site involves glutamate 177. Zn(2+) is bound by residues histidine 180 and histidine 186. CUB domains follow at residues 285 to 397 (CGET…YEAL) and 398 to 509 (CGGE…NYFK). Asparagine 295 and asparagine 326 each carry an N-linked (GlcNAc...) asparagine glycan. 8 disulfide bridges follow: cysteine 338–cysteine 360, cysteine 398–cysteine 424, cysteine 451–cysteine 473, cysteine 514–cysteine 526, cysteine 522–cysteine 535, cysteine 537–cysteine 550, cysteine 554–cysteine 580, and cysteine 607–cysteine 629. Residues 510–551 (EVDECSRPNNGGCEQRCVNTLGSYKCACDPGYELGQDKKSCE) form the EGF-like; calcium-binding domain. The CUB 3 domain occupies 554 to 666 (CGGFLTKLNG…KGFQANFFSE (113 aa)). N-linked (GlcNAc...) asparagine glycosylation is present at asparagine 562. A disordered region spans residues 682–707 (RGQQNQAPKRVRPRMRLRTVKKTRPP). Residues 690–707 (KRVRPRMRLRTVKKTRPP) are compositionally biased toward basic residues.

Interacts with olfml3/ont1. The cofactor is Zn(2+). Post-translationally, proteolytically activated in the trans-Golgi network by furin-like/paired basic proprotein convertases, cleavage is not required for secretion.

It is found in the golgi apparatus. It localises to the trans-Golgi network. Its subcellular location is the secreted. The protein resides in the extracellular space. The protein localises to the extracellular matrix. In terms of biological role, metalloprotease involved in pattern formation in gastrula and later differentiation of developing organs. Able to cleave chordin (chrd), suggesting that it may act in dorsoventral patterning during early development by regulating the chordin (chrd) activity. This chain is Bone morphogenetic protein 1 (bmp1), found in Xenopus laevis (African clawed frog).